A 2415-amino-acid polypeptide reads, in one-letter code: Spectrin alpha chain, erythrocytic 1 (2415 aa).

9 Spectrin repeats span residues 52–152, 157–259, 263–365, 370–471, 475–576, 580–681, 686–787, 792–894, and 898–967; these read YHYQ…SDVL, KFYQ…ESLS, DLQR…AKLK, YHRF…HQYR, DFHL…RKLL, QLLQ…GTQL, QLLQ…KKKL, KLQQ…NDLK, and QLQQ…QQQQ. Serine 257 carries the phosphoserine modification. The SH3 domain occupies 975 to 1034; sequence GREARVIALYDFEARSRREVSMKKNDVLTLLSSINKDWWKVEADDHQGFVPAVYVRKLAP. Serine 990 is modified (phosphoserine). Spectrin repeat units follow at residues 1085–1177, 1183–1285, 1287–1390, 1394–1489, 1499–1603, 1606–1709, 1712–1815, 1818–1921, 1924–2029, 2040–2142, and 2154–2254; these read LAYE…YQLL, VEMF…SLNE, HKFF…KMLD, ELQL…QLLT, DLKQ…KLNE, RQQR…KLKE, ALFQ…NLEE, EYLQ…SQLD, HAFQ…KLLE, LFME…QELQ, and MCQE…NLEQ. The residue at position 1972 (serine 1972) is a Phosphoserine. EF-hand domains lie at 2267–2302, 2310–2345, and 2347–2382; these read ETLK…LNYY, EPEP…KESE, and IKTS…EQVS. Positions 2280, 2282, 2284, 2286, 2291, 2323, 2329, and 2334 each coordinate Ca(2+).

Belongs to the spectrin family. In terms of assembly, composed of non-homologous chains, alpha and beta, which aggregate to form dimers, tetramers, and higher polymers. Interacts with FASLG. Interacts with BCAM.

It localises to the cytoplasm. The protein resides in the cytoskeleton. Its subcellular location is the cell cortex. Its function is as follows. Spectrin is the major constituent of the cytoskeletal network underlying the erythrocyte plasma membrane. It associates with band 4.1 and actin to form the cytoskeletal superstructure of the erythrocyte plasma membrane. This is Spectrin alpha chain, erythrocytic 1 (Spta1) from Mus musculus (Mouse).